We begin with the raw amino-acid sequence, 260 residues long: Acetylglutamate kinase (260 aa).

Residues 41–42 (GG), Arg63, and Asn156 each bind substrate.

This sequence belongs to the acetylglutamate kinase family. ArgB subfamily.

It is found in the cytoplasm. It carries out the reaction N-acetyl-L-glutamate + ATP = N-acetyl-L-glutamyl 5-phosphate + ADP. It participates in amino-acid biosynthesis; L-arginine biosynthesis; N(2)-acetyl-L-ornithine from L-glutamate: step 2/4. Its function is as follows. Catalyzes the ATP-dependent phosphorylation of N-acetyl-L-glutamate. The sequence is that of Acetylglutamate kinase from Halalkalibacterium halodurans (strain ATCC BAA-125 / DSM 18197 / FERM 7344 / JCM 9153 / C-125) (Bacillus halodurans).